A 40-amino-acid polypeptide reads, in one-letter code: FWGSGPFGMFPGGWGGPWNSPWYGPYGGYPYGGYGYPYGL.

The protein to C.vinosum CV3. The protein envelope of the sulfur globules is composed of the three different proteins TR0, TR1 and TR2.

Structural protein of the sulfur globules, which are intracellular globules that serve for sulfur storage in purple sulfur bacteria. This Thiocapsa roseopersicina protein is Sulfur globule protein TR2.